The sequence spans 140 residues: L-fucose mutarotase (140 aa).

Residue His22 is the Proton donor of the active site. Residues Asp30, Arg107, and 129–131 each bind substrate; that span reads YGN.

Belongs to the RbsD / FucU family. FucU mutarotase subfamily. Homodecamer.

It is found in the cytoplasm. It catalyses the reaction alpha-L-fucose = beta-L-fucose. Its pathway is carbohydrate metabolism; L-fucose metabolism. In terms of biological role, involved in the anomeric conversion of L-fucose. This Salmonella gallinarum (strain 287/91 / NCTC 13346) protein is L-fucose mutarotase.